The sequence spans 379 residues: MKHLAIFGSTGSVGQQALAIIRSLPHLFNVVALASYGNKRDLFFEQIREFSPSIVSVYDEQLYFEIRKEFPKVQAFLCEEGLLAAATANEIDTIVAASSGIVALPAIIAAMRSGKTLALANKEVLVSAGELINGLAQQYQTKILPIDSEHNALYQCLEGRDTSEVRKLFLTASGGPLLYKSKEELTRVTIQDVLKHPIWNMGAKITVDSSTLVNKGLEIIEAYWLFGLEHAEIDAVIHPQSLIHGMVEFEDGTVLSVMNPPSMLFPIQHVLTTPKRCPAPHKGMDFSIKQILEFFPIDEERFPSIALARQVLQDKGSSGPFFNAANEILVQRFLKKEIAWCDILDKLTRLMKNHRVSSCTSLDDVFSVDKEARALAQEI.

NADPH contacts are provided by Thr-10, Gly-11, Ser-12, Val-13, and Asn-121. Lys-122 provides a ligand contact to 1-deoxy-D-xylulose 5-phosphate. Glu-123 is a binding site for NADPH. Asp-147 lines the Mn(2+) pocket. Residues Ser-148, Glu-149, Ser-173, and His-196 each coordinate 1-deoxy-D-xylulose 5-phosphate. Glu-149 serves as a coordination point for Mn(2+). NADPH is bound at residue Gly-202. Residues Ser-209, Asn-214, Lys-215, and Glu-218 each coordinate 1-deoxy-D-xylulose 5-phosphate. Glu-218 contacts Mn(2+).

It belongs to the DXR family. Requires Mg(2+) as cofactor. Mn(2+) serves as cofactor.

The enzyme catalyses 2-C-methyl-D-erythritol 4-phosphate + NADP(+) = 1-deoxy-D-xylulose 5-phosphate + NADPH + H(+). The protein operates within isoprenoid biosynthesis; isopentenyl diphosphate biosynthesis via DXP pathway; isopentenyl diphosphate from 1-deoxy-D-xylulose 5-phosphate: step 1/6. Its function is as follows. Catalyzes the NADPH-dependent rearrangement and reduction of 1-deoxy-D-xylulose-5-phosphate (DXP) to 2-C-methyl-D-erythritol 4-phosphate (MEP). This Chlamydia abortus (strain DSM 27085 / S26/3) (Chlamydophila abortus) protein is 1-deoxy-D-xylulose 5-phosphate reductoisomerase.